Here is a 122-residue protein sequence, read N- to C-terminus: Large ribosomal subunit protein uL22 (122 aa).

Residues V102 to K122 form a disordered region.

This sequence belongs to the universal ribosomal protein uL22 family. In terms of assembly, part of the 50S ribosomal subunit.

In terms of biological role, this protein binds specifically to 23S rRNA; its binding is stimulated by other ribosomal proteins, e.g. L4, L17, and L20. It is important during the early stages of 50S assembly. It makes multiple contacts with different domains of the 23S rRNA in the assembled 50S subunit and ribosome. The globular domain of the protein is located near the polypeptide exit tunnel on the outside of the subunit, while an extended beta-hairpin is found that lines the wall of the exit tunnel in the center of the 70S ribosome. In Helicobacter pylori (strain ATCC 700392 / 26695) (Campylobacter pylori), this protein is Large ribosomal subunit protein uL22.